The chain runs to 486 residues: Aromatic-L-amino-acid decarboxylase (486 aa).

M1 is modified (N-acetylmethionine). 2 tandem repeats follow at residues 58–115 (QDVE…TELE) and 118–178 (MMDW…TQGA). The tract at residues 58–178 (QDVEKIIMPG…AASPGLTQGA (121 aa)) is 2 X approximate tandem repeats. T82 provides a ligand contact to substrate. The pyridoxal 5'-phosphate site is built by A148 and S149. A substrate-binding site is contributed by H192. Residues T246 and N300 each contribute to the pyridoxal 5'-phosphate site. K303 carries the N6-(pyridoxal phosphate)lysine modification.

This sequence belongs to the group II decarboxylase family. As to quaternary structure, homodimer. Requires pyridoxal 5'-phosphate as cofactor.

It catalyses the reaction L-dopa + H(+) = dopamine + CO2. The enzyme catalyses 5-hydroxy-L-tryptophan + H(+) = serotonin + CO2. Its pathway is catecholamine biosynthesis; dopamine biosynthesis; dopamine from L-tyrosine: step 2/2. Catalyzes the decarboxylation of L-3,4-dihydroxyphenylalanine (DOPA) to dopamine and L-5-hydroxytryptophan to serotonin. This chain is Aromatic-L-amino-acid decarboxylase (DDC), found in Sus scrofa (Pig).